A 444-amino-acid polypeptide reads, in one-letter code: Abhydrolase domain-containing protein abhd-5.2 (444 aa).

An AB hydrolase-1 domain is found at 162–409; the sequence is PIVLIHGFGA…SAGHHVYADD (248 aa).

Belongs to the peptidase S33 family. ABHD4/ABHD5 subfamily. In terms of assembly, interacts with atgl-1; the interaction tethers atgl-1 to lipid droplets. As to expression, expressed in the hypodermis and intestine.

It localises to the lipid droplet. In terms of biological role, acts coordinately with phospholipase atgl-1 within the lipolytic cascade to distribute stored energy to tissues to maintain energy levels during the dauer phase. Localizes atgl-1 to lipid droplets, possibly to facilitate triglyceride hydrolysis. Regulates lipid droplet size, lipid content, the exchange of lipids between lipid droplets and fusion of lipid droplets during the dauer phase. In Caenorhabditis elegans, this protein is Abhydrolase domain-containing protein abhd-5.2.